The chain runs to 106 residues: MSPLSEYALRMSRLSARIFGEVARSTDSKSMKVVSLFSEQPLAKKKETYDWYPNHNTYFALMGNLRFLGLYRDEHQDFKDEQRRLKKLRGKGKPRKGEGKRATKKK.

S2 carries the N-acetylserine modification. The tract at residues 81–106 is disordered; it reads EQRRLKKLRGKGKPRKGEGKRATKKK. Residues 84–94 show a composition bias toward basic residues; the sequence is RLKKLRGKGKP. The span at 95–106 shows a compositional bias: basic and acidic residues; it reads RKGEGKRATKKK.

This sequence belongs to the mitochondrion-specific ribosomal protein mS33 family. Component of the mitochondrial ribosome small subunit (28S) which comprises a 12S rRNA and about 30 distinct proteins.

The protein resides in the mitochondrion. This chain is Small ribosomal subunit protein mS33 (Mrps33), found in Mus musculus (Mouse).